Reading from the N-terminus, the 106-residue chain is Large ribosomal subunit protein eL42 (106 aa).

It belongs to the eukaryotic ribosomal protein eL42 family.

This is Large ribosomal subunit protein eL42 (RPL44) from Candida tropicalis (Yeast).